The sequence spans 305 residues: Homoserine kinase (305 aa).

An ATP-binding site is contributed by 90 to 100; sequence PLARGLGSSAS.

It belongs to the GHMP kinase family. Homoserine kinase subfamily.

It localises to the cytoplasm. It catalyses the reaction L-homoserine + ATP = O-phospho-L-homoserine + ADP + H(+). It functions in the pathway amino-acid biosynthesis; L-threonine biosynthesis; L-threonine from L-aspartate: step 4/5. In terms of biological role, catalyzes the ATP-dependent phosphorylation of L-homoserine to L-homoserine phosphate. This is Homoserine kinase from Staphylococcus haemolyticus (strain JCSC1435).